A 142-amino-acid chain; its full sequence is Large ribosomal subunit protein uL11 (142 aa).

It belongs to the universal ribosomal protein uL11 family. Part of the ribosomal stalk of the 50S ribosomal subunit. Interacts with L10 and the large rRNA to form the base of the stalk. L10 forms an elongated spine to which L12 dimers bind in a sequential fashion forming a multimeric L10(L12)X complex. In terms of processing, one or more lysine residues are methylated.

Its function is as follows. Forms part of the ribosomal stalk which helps the ribosome interact with GTP-bound translation factors. The protein is Large ribosomal subunit protein uL11 of Bartonella bacilliformis (strain ATCC 35685 / KC583 / Herrer 020/F12,63).